The chain runs to 299 residues: ATP phosphoribosyltransferase (299 aa).

Belongs to the ATP phosphoribosyltransferase family. Long subfamily. It depends on Mg(2+) as a cofactor.

The protein resides in the cytoplasm. The catalysed reaction is 1-(5-phospho-beta-D-ribosyl)-ATP + diphosphate = 5-phospho-alpha-D-ribose 1-diphosphate + ATP. The protein operates within amino-acid biosynthesis; L-histidine biosynthesis; L-histidine from 5-phospho-alpha-D-ribose 1-diphosphate: step 1/9. With respect to regulation, feedback inhibited by histidine. Its function is as follows. Catalyzes the condensation of ATP and 5-phosphoribose 1-diphosphate to form N'-(5'-phosphoribosyl)-ATP (PR-ATP). Has a crucial role in the pathway because the rate of histidine biosynthesis seems to be controlled primarily by regulation of HisG enzymatic activity. The chain is ATP phosphoribosyltransferase from Shewanella piezotolerans (strain WP3 / JCM 13877).